Here is an 832-residue protein sequence, read N- to C-terminus: Protein PPP4R3C (832 aa).

The tract at residues 708-832 is disordered; the sequence is RTQEGEAVMP…SPKKKPHLSS (125 aa). Composition is skewed to basic and acidic residues over residues 725–735 and 749–765; these read FTETKRTHQEG and METKRNQEHEGKVDSPK. Over residues 769-779 the composition is skewed to low complexity; sequence SGDFKFSSSYS. The segment covering 801–820 has biased composition (acidic residues); that stretch reads PDDEEEKEEDEEEKEEDKED.

The protein belongs to the SMEK family.

The sequence is that of Protein PPP4R3C from Homo sapiens (Human).